The chain runs to 807 residues: Glycerol-3-phosphate acyltransferase (807 aa).

Positions C308 to M313 match the HXXXXD motif motif.

Belongs to the GPAT/DAPAT family.

It is found in the cell inner membrane. The catalysed reaction is sn-glycerol 3-phosphate + an acyl-CoA = a 1-acyl-sn-glycero-3-phosphate + CoA. It participates in phospholipid metabolism; CDP-diacylglycerol biosynthesis; CDP-diacylglycerol from sn-glycerol 3-phosphate: step 1/3. The protein is Glycerol-3-phosphate acyltransferase of Shewanella sp. (strain ANA-3).